Consider the following 260-residue polypeptide: Indole-3-glycerol phosphate synthase (260 aa).

This sequence belongs to the TrpC family.

The enzyme catalyses 1-(2-carboxyphenylamino)-1-deoxy-D-ribulose 5-phosphate + H(+) = (1S,2R)-1-C-(indol-3-yl)glycerol 3-phosphate + CO2 + H2O. It participates in amino-acid biosynthesis; L-tryptophan biosynthesis; L-tryptophan from chorismate: step 4/5. The sequence is that of Indole-3-glycerol phosphate synthase from Thermoanaerobacter pseudethanolicus (strain ATCC 33223 / 39E) (Clostridium thermohydrosulfuricum).